Consider the following 261-residue polypeptide: MWFLILFLDLSLGQIDAAPPGQSRVIGGYKCEKNSQPWQVALYSFTKYLCGGVLIDPSWVITAAHCSSNNYQVWLGRNNLLEDEPFAQHRLVSQSFPHPDYKPFLMRNHTRKPGDDHSNDLMLLHLSQPADITDGVKVIDLPTEEPKVGSTCLASGWGSTKPLIWEFPDDLQCVNIHLLSNEKCIKAYKEKVTDLMLCAGELEGGKDTCTGDSGGPLLCDGVLQGITSWGSVPCAKTNMPAIYTKLIKFTSWIKEVMKENP.

The signal sequence occupies residues 1–18 (MWFLILFLDLSLGQIDAA). The propeptide at 19–24 (PPGQSR) is activation peptide. The 234-residue stretch at 25 to 258 (VIGGYKCEKN…FTSWIKEVMK (234 aa)) folds into the Peptidase S1 domain. 5 disulfides stabilise this stretch: Cys-31–Cys-173, Cys-50–Cys-66, Cys-152–Cys-219, Cys-184–Cys-198, and Cys-209–Cys-234. His-65 acts as the Charge relay system in catalysis. N-linked (GlcNAc...) asparagine glycosylation occurs at Asn-108. The Charge relay system role is filled by Asp-120. Residue Ser-213 is the Charge relay system of the active site.

This sequence belongs to the peptidase S1 family. Kallikrein subfamily. In terms of tissue distribution, kidney and submandibular gland. Not expressed in liver, pancreas, spleen, parotid, testis, cortex, prostate, ovary and pituitary.

The catalysed reaction is Preferential cleavage of Arg-|-Xaa bonds in small molecule substrates. Highly selective action to release kallidin (lysyl-bradykinin) from kininogen involves hydrolysis of Met-|-Xaa or Leu-|-Xaa.. In terms of biological role, glandular kallikreins cleave Met-Lys and Arg-Ser bonds in kininogen to release Lys-bradykinin. Predominant kallikrein protein in the kidney. The polypeptide is Glandular kallikrein-7, submandibular/renal (Klk7) (Rattus norvegicus (Rat)).